The primary structure comprises 206 residues: dCTP deaminase, dUMP-forming (206 aa).

Residues 117–122 (RSSFGR), aspartate 135, 143–145 (TLE), glutamine 163, tyrosine 177, lysine 184, and glutamine 188 contribute to the dCTP site. Glutamate 145 (proton donor/acceptor) is an active-site residue.

The protein belongs to the dCTP deaminase family. In terms of assembly, homotrimer.

The enzyme catalyses dCTP + 2 H2O = dUMP + NH4(+) + diphosphate. Its pathway is pyrimidine metabolism; dUMP biosynthesis; dUMP from dCTP: step 1/1. Its function is as follows. Bifunctional enzyme that catalyzes both the deamination of dCTP to dUTP and the hydrolysis of dUTP to dUMP without releasing the toxic dUTP intermediate. The chain is dCTP deaminase, dUMP-forming from Methanococcus maripaludis (strain DSM 14266 / JCM 13030 / NBRC 101832 / S2 / LL).